The primary structure comprises 555 residues: Zinc finger and SCAN domain-containing protein 21 (555 aa).

Disordered stretches follow at residues 1–74, 102–133, 204–243, and 263–354; these read MTKV…SKDK, TIKA…YHDT, LDEP…TQHV, and EEVF…RPAP. 3 tandem repeats follow at residues 18-56, 57-95, and 96-134. The 3 X 39 AA approximate tandem repeats stretch occupies residues 18–134; it reads ESMGPSPIKV…FRQFGYHDTP (117 aa). Residue Lys-26 forms a Glycyl lysine isopeptide (Lys-Gly) (interchain with G-Cter in SUMO2) linkage. Residues 122 to 204 form the SCAN box domain; that stretch reads RQRFRQFGYH…TLLEDLEQEL (83 aa). Residues 210–240 show a composition bias toward polar residues; the sequence is QVSSPPNEQKQSWEKMSTSGTAMESLSSTET. Residues 280-302 show a composition bias toward basic and acidic residues; that stretch reads PQKEDSADEHRSSEEESHADGLK. Glycyl lysine isopeptide (Lys-Gly) (interchain with G-Cter in SUMO2) cross-links involve residues Lys-302 and Lys-313. Residues 316–332 are compositionally biased toward basic and acidic residues; the sequence is SRSERQWANNLERERGT. C2H2-type zinc fingers lie at residues 359–381, 387–409, 415–436, 442–464, 470–492, 498–520, and 526–548; these read YICA…RRTH, YVCT…YRTH, YDCK…QRMH, YQCK…YRIH, YQCN…QRLH, YKCK…HRIH, and YWCS…QRVH. A Glycyl lysine isopeptide (Lys-Gly) (interchain with G-Cter in SUMO2) cross-link involves residue Lys-431.

It belongs to the krueppel C2H2-type zinc-finger protein family. Expressed predominantly in the spermatocytes and spermatids of adult testes. It is also present at lower levels in the ovary, brain, spleen, embryo and fetus.

Its subcellular location is the nucleus. Its function is as follows. Strong transcriptional activator. Plays an important role in spermatogenesis; essential for the progression of meiotic prophase I in spermatocytes. This is Zinc finger and SCAN domain-containing protein 21 (Zscan21) from Mus musculus (Mouse).